Reading from the N-terminus, the 595-residue chain is MEEADRILIHSLRQAGTAVPPDVQTLRAFTTELVVEAVVRCLRVINPAVGSGLSPLLPLAMSARFRLAMSLAQACMDLGYPLELGYQNFLYPSEPDLRDLLLFLAERLPTDASEDADQSAGESAILLRAIGSRIRDHLALPWVPPLLRTPKLQYLQGSAHQKPFHASRLVMPELSSRGESREFQAGPLLLPVPAQVPQPAARAASLLEHHAIQLCQHTGRDRAGDEDWGHRTSRLPAQEDTRAQRQRLQKHLAEHLRQTWGRPGPPQQARDLGEVLQAWGAGARPGTPKGSRFTHSKKFTFHLEPEAQAAQVSDVPATSQRPEQDTWAAQEQELESLREQLEGVNHNIEEVEANMKTLGINLVQVETECRQSELSIVEREQALRLKSQAVELLPDGAANLAKLQLVVESSAQRVIHLAGQWEKHRVPLLAEYRHLRKLQDCRELESSRRLAEIQELHQSVRAAAEEARRKEEVYKQLVSELETLPKDVSRLAYTQRILEIVGNIRKQKEEITKDAKKDDAVRKAYKYLAALHENCSQLIQTIEDTGTIMREVRDLEEQIETEMGKKTLSNLDKIREDYRALRQENAGLLGRVREA.

Residues Met-1–Arg-321 form a sufficient for interaction with COMMD1 region. The tract at residues Met-1 to Ser-447 is sufficicient and required for interaction with CCDC93. Residues Thr-218–His-230 are compositionally biased toward basic and acidic residues. The tract at residues Thr-218 to Ala-243 is disordered. Positions Glu-323–Cys-369 form a coiled coil. Ser-410 is subject to Phosphoserine. 2 coiled-coil regions span residues Ser-447–Leu-484 and Gly-564–Ala-595.

The protein belongs to the CCDC22 family. Component of the commander complex consisting of the CCC subcomplex and the retriever subcomplex. Component of the CCC (COMMD/CCDC22/CCDC93) subcomplex consisting of COMMD1, COMMD2, COMMD3, COMMD4, COMMD5, COMMD6, COMMD7, COMMD8, COMMD9, COMMD10, CCDC22 and CCDC93. Forms a coiled-coil heterodimer with CCDC22; this heterodimer interacts with the guanine nucleotide exchange factor DENND10; the interaction is direct. Interacts with CUL1, CUL2, CUL3, SKP1, BTRC. Interacts with SNX17 and SNX31. Interacts with CPNE1 and CPNE4.

The protein localises to the endosome. Its subcellular location is the cytoplasm. It localises to the cytoskeleton. It is found in the microtubule organizing center. The protein resides in the centrosome. Functionally, component of the commander complex that is essential for endosomal recycling of transmembrane cargos; the Commander complex is composed of composed of the CCC subcomplex and the retriever subcomplex. Component of the CCC complex, which is involved in the regulation of endosomal recycling of surface proteins, including integrins, signaling receptor and channels. Involved in regulation of NF-kappa-B signaling. Promotes ubiquitination of I-kappa-B-kinase subunit IKBKB and its subsequent proteasomal degradation leading to NF-kappa-B activation; the function may involve association with COMMD8 and a CUL1-dependent E3 ubiquitin ligase complex. May down-regulate NF-kappa-B activity via association with COMMD1 and involving a CUL2-dependent E3 ubiquitin ligase complex. Regulates the cellular localization of COMM domain-containing proteins, such as COMMD1 and COMMD10. Component of the CCC complex, which is involved in the regulation of endosomal recycling of surface proteins, including integrins, signaling receptor and channels. The CCC complex associates with SNX17, retriever and WASH complexes to prevent lysosomal degradation and promote cell surface recycling of numerous cargos such as integrins ITGA5:ITGB1. Plays a role in copper ion homeostasis. Involved in copper-dependent ATP7A trafficking between the trans-Golgi network and vesicles in the cell periphery; the function is proposed to depend on its association within the CCC complex and cooperation with the WASH complex on early endosomes. The chain is Coiled-coil domain-containing protein 22 (CCDC22) from Bos taurus (Bovine).